Here is a 397-residue protein sequence, read N- to C-terminus: uncharacterized protein (397 aa).

2 positions are modified to phosphoserine: S115 and S141. Positions 135-156 are disordered; that stretch reads NSLNHDSPPHTPARRSDNSTSK. A Glycyl lysine isopeptide (Lys-Gly) (interchain with G-Cter in SUMO2) cross-link involves residue K239. Phosphoserine is present on residues S269 and S296. The tract at residues 289–316 is disordered; it reads GRGPTKASPQPALTVKAKATSSATTLAS. Over residues 300–316 the composition is skewed to low complexity; the sequence is ALTVKAKATSSATTLAS. S342 is modified (phosphoserine). The tract at residues 354-397 is disordered; it reads SEAQDSQVTSTKSPTVRCIVPDPPAPLASQRPPRRRWRRTCKDC. A compositionally biased stretch (polar residues) spans 356–367; it reads AQDSQVTSTKSP. The segment covering 385–397 has biased composition (basic residues); sequence PPRRRWRRTCKDC.

This is an uncharacterized protein from Rattus norvegicus (Rat).